A 159-amino-acid chain; its full sequence is Cytochrome c-type biogenesis protein CcmE (159 aa).

Residues 1-23 (MNNSSLENSASLKVILKQRKKKR) are Cytoplasmic-facing. Residues 24-44 (LLIILLCCLVMAIAASLVVYA) traverse the membrane as a helical; Signal-anchor for type II membrane protein segment. Residues 45 to 159 (MRHAVSFFRM…RLKKHYSVEK (115 aa)) lie on the Periplasmic side of the membrane. His-138 and Tyr-142 together coordinate heme.

It belongs to the CcmE/CycJ family.

The protein localises to the cell inner membrane. Its function is as follows. Heme chaperone required for the biogenesis of c-type cytochromes. Transiently binds heme delivered by CcmC and transfers the heme to apo-cytochromes in a process facilitated by CcmF and CcmH. This Bartonella tribocorum (strain CIP 105476 / IBS 506) protein is Cytochrome c-type biogenesis protein CcmE.